Consider the following 107-residue polypeptide: Guanylate cyclase activator 2B (107 aa).

Residues 1-21 (MSGSQLWAAVVVLLLLQSAQG) form the signal peptide. Residues 22–92 (VYIKYHGFQV…STFKALRTIA (71 aa)) constitute a propeptide that is removed on maturation. Intrachain disulfides connect Cys63/Cys76, Cys96/Cys104, and Cys99/Cys107.

This sequence belongs to the guanylin family.

It is found in the secreted. In terms of biological role, endogenous activator of intestinal guanylate cyclase. It stimulates this enzyme through the same receptor binding region as the heat-stable enterotoxins. May be a potent physiological regulator of intestinal fluid and electrolyte transport. May be an autocrine/paracrine regulator of intestinal salt and water transport. The chain is Guanylate cyclase activator 2B (GUCA2B) from Notomys alexis (Spinifex hopping mouse).